Here is a 602-residue protein sequence, read N- to C-terminus: Aspartate--tRNA(Asp/Asn) ligase (602 aa).

L-aspartate is bound at residue glutamate 176. Residues 200-203 (QQFK) are aspartate. Positions 222 and 452 each coordinate L-aspartate. 222 to 224 (RDE) is a binding site for ATP. Glutamate 490 serves as a coordination point for ATP. Residue arginine 497 coordinates L-aspartate. 542 to 545 (GIDR) serves as a coordination point for ATP.

This sequence belongs to the class-II aminoacyl-tRNA synthetase family. Type 1 subfamily. As to quaternary structure, homodimer.

The protein resides in the cytoplasm. It catalyses the reaction tRNA(Asx) + L-aspartate + ATP = L-aspartyl-tRNA(Asx) + AMP + diphosphate. In terms of biological role, aspartyl-tRNA synthetase with relaxed tRNA specificity since it is able to aspartylate not only its cognate tRNA(Asp) but also tRNA(Asn). Reaction proceeds in two steps: L-aspartate is first activated by ATP to form Asp-AMP and then transferred to the acceptor end of tRNA(Asp/Asn). This is Aspartate--tRNA(Asp/Asn) ligase from Rickettsia bellii (strain OSU 85-389).